Here is a 140-residue protein sequence, read N- to C-terminus: Large ribosomal subunit protein bL17 (140 aa).

The protein belongs to the bacterial ribosomal protein bL17 family. Part of the 50S ribosomal subunit. Contacts protein L32.

This is Large ribosomal subunit protein bL17 from Rhizobium johnstonii (strain DSM 114642 / LMG 32736 / 3841) (Rhizobium leguminosarum bv. viciae).